Here is a 500-residue protein sequence, read N- to C-terminus: Sulfate adenylyltransferase (500 aa).

The segment at 1–165 (MLSPHGGILQ…LEAIQLPAHY (165 aa)) is N-terminal. The interval 166–390 (DYLNLRKSPA…LRQYNPPRYR (225 aa)) is catalytic. Glutamine 193 contributes to the sulfate binding site. ATP contacts are provided by residues 193 to 196 (QTRN) and 287 to 290 (GRDH). Residues threonine 194, arginine 195, and asparagine 196 contribute to the active site. Arginine 195 is a binding site for sulfate. A sulfate-binding site is contributed by alanine 291. Isoleucine 329 is an ATP binding site. Residues 391–500 (QGFVIVVNHE…FLEDNKFFQF (110 aa)) are required for oligomerization; adenylyl-sulfate kinase-like.

Belongs to the sulfate adenylyltransferase family. In terms of assembly, homohexamer. Dimer of trimers.

The protein resides in the cytoplasm. The catalysed reaction is sulfate + ATP + H(+) = adenosine 5'-phosphosulfate + diphosphate. The protein operates within sulfur metabolism; hydrogen sulfide biosynthesis; sulfite from sulfate: step 1/3. Functionally, catalyzes the first intracellular reaction of sulfate assimilation, forming adenosine-5'-phosphosulfate (APS) from inorganic sulfate and ATP. Plays an important role in sulfate activation as a component of the biosynthesis pathway of sulfur-containing amino acids. In Eremothecium gossypii (strain ATCC 10895 / CBS 109.51 / FGSC 9923 / NRRL Y-1056) (Yeast), this protein is Sulfate adenylyltransferase.